Reading from the N-terminus, the 246-residue chain is Probable transcriptional regulatory protein YebC (246 aa).

The segment at 1–20 is disordered; it reads MAGHSKWANTRHRKAAQDAK.

This sequence belongs to the TACO1 family.

It is found in the cytoplasm. This Shigella dysenteriae serotype 1 (strain Sd197) protein is Probable transcriptional regulatory protein YebC.